The following is a 164-amino-acid chain: Respiratory growth induced protein 2 (164 aa).

The protein belongs to the RGI1 family.

The protein resides in the cytoplasm. Functionally, involved in the control of energetic metabolism and significantly contribute to cell fitness, especially under respiratory growth conditions. This chain is Respiratory growth induced protein 2 (RGI2), found in Saccharomyces cerevisiae (strain JAY291) (Baker's yeast).